Reading from the N-terminus, the 354-residue chain is uncharacterized protein (354 aa).

Residues 48-285 (VETWEISKIY…DEGYEVVLKG (238 aa)) form the ABC transporter domain. An ATP-binding site is contributed by 87-94 (GPNGAGKT).

Belongs to the ABC transporter superfamily.

This is an uncharacterized protein from Synechocystis sp. (strain ATCC 27184 / PCC 6803 / Kazusa).